The chain runs to 301 residues: Ribosomal RNA small subunit methyltransferase A (301 aa).

S-adenosyl-L-methionine contacts are provided by Asn18, Leu20, Gly45, Glu66, Asp91, and Asn112. The interval 267–301 (PPEAAPVKEKRRMAKNKMTEPANNNLNENSAPEVD) is disordered. The segment covering 287–301 (PANNNLNENSAPEVD) has biased composition (polar residues).

The protein belongs to the class I-like SAM-binding methyltransferase superfamily. rRNA adenine N(6)-methyltransferase family. RsmA subfamily.

The protein localises to the cytoplasm. It carries out the reaction adenosine(1518)/adenosine(1519) in 16S rRNA + 4 S-adenosyl-L-methionine = N(6)-dimethyladenosine(1518)/N(6)-dimethyladenosine(1519) in 16S rRNA + 4 S-adenosyl-L-homocysteine + 4 H(+). In terms of biological role, specifically dimethylates two adjacent adenosines (A1518 and A1519) in the loop of a conserved hairpin near the 3'-end of 16S rRNA in the 30S particle. May play a critical role in biogenesis of 30S subunits. This is Ribosomal RNA small subunit methyltransferase A from Colwellia psychrerythraea (strain 34H / ATCC BAA-681) (Vibrio psychroerythus).